The sequence spans 172 residues: Adenine phosphoribosyltransferase (172 aa).

This sequence belongs to the purine/pyrimidine phosphoribosyltransferase family. As to quaternary structure, homodimer.

The protein resides in the cytoplasm. It catalyses the reaction AMP + diphosphate = 5-phospho-alpha-D-ribose 1-diphosphate + adenine. It participates in purine metabolism; AMP biosynthesis via salvage pathway; AMP from adenine: step 1/1. In terms of biological role, catalyzes a salvage reaction resulting in the formation of AMP, that is energically less costly than de novo synthesis. The polypeptide is Adenine phosphoribosyltransferase (Clostridium acetobutylicum (strain ATCC 824 / DSM 792 / JCM 1419 / IAM 19013 / LMG 5710 / NBRC 13948 / NRRL B-527 / VKM B-1787 / 2291 / W)).